Reading from the N-terminus, the 786-residue chain is Elastin (786 aa).

An N-terminal signal peptide occupies residues 1–26; sequence MAGLTAAAPRPGVLLLLLSILHPSRP. Position 34 is a hydroxyproline (P34). Hydroxyproline; partial occurs at positions 65, 67, and 88. An allysine mark is found at K104 and K107. A 4-hydroxyproline; partial modification is found at P116. Hydroxyproline; partial occurs at positions 156, 167, 170, and 177. P190 bears the 4-hydroxyproline; partial mark. K241, K261, and K265 each carry allysine. P283 and P286 each carry 4-hydroxyproline; partial. P290 is modified (hydroxyproline; partial). Allysine occurs at positions 312 and 315. A 4-hydroxyproline; partial mark is found at P327, P342, and P347. A hydroxyproline; partial mark is found at P352 and P355. P360 carries the 4-hydroxyproline; partial modification. Allysine is present on residues K375, K379, and K382. A 4-hydroxyproline; partial modification is found at P415. P421 carries the hydroxyproline; partial modification. The residue at position 427 (P427) is a 4-hydroxyproline; partial. Residues K448 and K451 each carry the allysine modification. P465 bears the Hydroxyproline; partial mark. At P481 the chain carries 4-hydroxyproline; partial. 2 positions are modified to allysine: K492 and K496. 2 positions are modified to hydroxyproline; partial: P522 and P550. Residues K558, K562, and K566 each carry the allysine modification. 4-hydroxyproline; partial is present on P580. Residues P589 and P598 each carry the 4-hydroxyproline modification. 4-hydroxyproline; partial is present on P607. The tract at residues 615–645 is disordered; that stretch reads EGVRRSLSPELREGDPSSSQHLPSTPSSPRV. Residues 630 to 645 are compositionally biased toward low complexity; it reads PSSSQHLPSTPSSPRV. P646 carries the hydroxyproline; partial modification. An allysine mark is found at K653 and K656. 4-hydroxyproline; partial is present on P677. Allysine occurs at positions 693, 697, 735, and 738. A hydroxyproline; partial mark is found at P769 and P772. Cysteines 776 and 781 form a disulfide.

Belongs to the elastin family. In terms of assembly, the polymeric elastin chains are cross-linked together into an extensible 3D network. Forms a ternary complex with BGN and MFAP2. Interacts with MFAP2 via divalent cations (calcium &gt; magnesium &gt; manganese) in a dose-dependent and saturating manner. Interacts with FBLN5. Interacts with FBN1. Forms a ternary complex with FBN1 and FBLN2 or FBLN5. Interacts with MFAP4 in a Ca (2+)-dependent manner; this interaction promotes ELN self-assembly. Interacts with EFEMP2 with moderate affinity. Elastin is formed through the cross-linking of its soluble precursor tropoelastin. Cross-linking is initiated through the action of lysyl oxidase on exposed lysines to form allysine. Subsequent spontaneous condensation reactions with other allysine or unmodified lysine residues result in various bi-, tri-, and tetrafunctional cross-links. The most abundant cross-links in mature elastin fibers are lysinonorleucine, allysine aldol, desmosine, and isodesmosine. Post-translationally, hydroxylation on proline residues within the sequence motif, GXPG, is most likely 4-hydroxy as this fits the requirement for 4-hydroxylation in vertebrates. As to expression, expressed within the outer myometrial smooth muscle and throughout the arteriolar tree of uterus (at protein level). Also expressed in the large arteries, lung and skin.

The protein localises to the secreted. The protein resides in the extracellular space. It is found in the extracellular matrix. Functionally, major structural protein of tissues such as aorta and nuchal ligament, which must expand rapidly and recover completely. Molecular determinant of the late arterial morphogenesis, stabilizing arterial structure by regulating proliferation and organization of vascular smooth muscle. The polypeptide is Elastin (ELN) (Homo sapiens (Human)).